The primary structure comprises 238 residues: Xyloglucan-specific endo-beta-1,4-glucanase A (238 aa).

An N-terminal signal peptide occupies residues Met-1–Ala-14.

Belongs to the glycosyl hydrolase 12 (cellulase H) family.

It localises to the secreted. It carries out the reaction xyloglucan + H2O = xyloglucan oligosaccharides.. Catalyzes endohydrolysis of 1,4-beta-D-glucosidic linkages in xyloglucan with retention of the beta-configuration of the glycosyl residues. Specific for xyloglucan and does not hydrolyze other cell wall components. The sequence is that of Xyloglucan-specific endo-beta-1,4-glucanase A (xgeA) from Aspergillus aculeatus.